The following is a 635-amino-acid chain: 1-deoxy-D-xylulose-5-phosphate synthase (635 aa).

Thiamine diphosphate contacts are provided by residues H72 and 113-115; that span reads GHA. D144 lines the Mg(2+) pocket. Residues 145–146, N174, Y287, and E370 contribute to the thiamine diphosphate site; that span reads GA. Residue N174 coordinates Mg(2+).

Belongs to the transketolase family. DXPS subfamily. Homodimer. Mg(2+) serves as cofactor. Requires thiamine diphosphate as cofactor.

The catalysed reaction is D-glyceraldehyde 3-phosphate + pyruvate + H(+) = 1-deoxy-D-xylulose 5-phosphate + CO2. The protein operates within metabolic intermediate biosynthesis; 1-deoxy-D-xylulose 5-phosphate biosynthesis; 1-deoxy-D-xylulose 5-phosphate from D-glyceraldehyde 3-phosphate and pyruvate: step 1/1. Its function is as follows. Catalyzes the acyloin condensation reaction between C atoms 2 and 3 of pyruvate and glyceraldehyde 3-phosphate to yield 1-deoxy-D-xylulose-5-phosphate (DXP). In Trichormus variabilis (strain ATCC 29413 / PCC 7937) (Anabaena variabilis), this protein is 1-deoxy-D-xylulose-5-phosphate synthase.